Reading from the N-terminus, the 139-residue chain is Antitoxin HicB 2 (139 aa).

One can recognise an HTH cro/C1-type domain in the interval 87–137 (MLQTRTSNAELARLLGTRPQEIQRIVSLSHSTKIDTIANALNALGKHLELV). The H-T-H motif DNA-binding region spans 96–113 (ELARLLGTRPQEIQRIVS).

The protein belongs to the HicB antitoxin family. In terms of assembly, probably forms a complex with the probable mRNA interferase HicA2 (its cognate toxin); when complexed with HicA inhibits the toxin activity.

Its function is as follows. Antitoxin component of a type II toxin-antitoxin (TA) system. Functions as an mRNA interferase antitoxin preventing effects of the HicA 2 toxin. The chain is Antitoxin HicB 2 (hicB2) from Photorhabdus laumondii subsp. laumondii (strain DSM 15139 / CIP 105565 / TT01) (Photorhabdus luminescens subsp. laumondii).